A 209-amino-acid polypeptide reads, in one-letter code: MAIERYFIKEGVKEMLIDEYLEKELRRAGYGGIDIKKTPLGTKVIIFAASPGYVIGRGGRRIRELTRILERQFGLENPQIEVEEIKNPYLNAKVQAVRLAQALERGIHFRRAAYSAIRAIMRNGARGVEIRLSGKLTGERAKSVRFYQGYLAKVGNPAETLVSKGYAQALLKLGVIGVKVAIMPPDARLPDEIEVKEIVEEEVSGNEAQ.

Positions 17-86 (IDEYLEKELR…NPQIEVEEIK (70 aa)) constitute a KH type-2 domain.

This sequence belongs to the universal ribosomal protein uS3 family. In terms of assembly, part of the 30S ribosomal subunit.

Functionally, binds the lower part of the 30S subunit head. This Thermococcus gammatolerans (strain DSM 15229 / JCM 11827 / EJ3) protein is Small ribosomal subunit protein uS3.